The primary structure comprises 491 residues: Cytochrome P450 monooxygenase 521A1 (491 aa).

Residues 1 to 21 (MILLTLLYLIIFYIIIDFIKK) form a helical membrane-spanning segment. Cys438 contributes to the heme binding site.

The protein belongs to the cytochrome P450 family. Heme is required as a cofactor.

Its subcellular location is the membrane. It carries out the reaction discoidol + reduced [NADPH--hemoprotein reductase] + O2 = discodiene + acetone + oxidized [NADPH--hemoprotein reductase] + 2 H2O + H(+). It participates in sesquiterpene biosynthesis. Its function is as follows. Cytochrome P450 monooxygenase; part of the gene cluster that mediates the biosynthesis of the trisnorsesquiterpene discodiene which has a function during later stages of multicellular development, during the transition from fingers to Mexican hats. The terpene synthase tps8 converts its substrate farnesyl diphosphate (FDP) into the bicyclic sesquiterpene alcohol discoidol. The cytochrome P450 monooxygenase cyp521A1 then catalyzes the oxidative degradation of discoidol to form the trisnorsesquiterpene discodiene. This chain is Cytochrome P450 monooxygenase 521A1 (cyp521A1), found in Dictyostelium discoideum (Social amoeba).